The sequence spans 327 residues: Malate dehydrogenase (327 aa).

12–18 is an NAD(+) binding site; it reads GAAGQIA. Substrate is bound by residues Arg-93 and Arg-99. Residues Asn-106, Gln-113, and 130-132 contribute to the NAD(+) site; that span reads VGN. Residues Asn-132 and Arg-163 each contribute to the substrate site. The Proton acceptor role is filled by His-188.

This sequence belongs to the LDH/MDH superfamily. MDH type 2 family.

It catalyses the reaction (S)-malate + NAD(+) = oxaloacetate + NADH + H(+). In terms of biological role, catalyzes the reversible oxidation of malate to oxaloacetate. This Acidiphilium cryptum (strain JF-5) protein is Malate dehydrogenase.